The sequence spans 501 residues: Aldehyde dehydrogenase 1A1 (501 aa).

At serine 2 the chain carries N-acetylserine. Lysine 91 and lysine 128 each carry N6-acetyllysine. Residues 167 to 170 (IPWN), 193 to 196 (KPAE), 226 to 227 (GP), and 246 to 247 (GS) contribute to the NAD(+) site. Lysine 252 carries the N6-acetyllysine modification. The Proton acceptor role is filled by glutamate 269. 269 to 271 (ELG) lines the NAD(+) pocket. Cysteine 303 (nucleophile) is an active-site residue. Residues 336 to 501 (LTPGVSQGPQ…VTIKISQKNS (166 aa)) are mediates interaction with PRMT3. Position 337 is a phosphothreonine (threonine 337). 349–353 (EQYEK) serves as a coordination point for NAD(+). N6-acetyllysine is present on residues lysine 353 and lysine 367. 400–402 (EIF) contributes to the NAD(+) binding site. Lysine 410 carries the post-translational modification N6-acetyllysine. Serine 413 carries the post-translational modification Phosphoserine. N6-acetyllysine is present on residues lysine 419 and lysine 495.

It belongs to the aldehyde dehydrogenase family. As to quaternary structure, homotetramer. Interacts with PRMT3; the interaction is direct, inhibits ALDH1A1 aldehyde dehydrogenase activity and is independent of the methyltransferase activity of PRMT3. The N-terminus is blocked most probably by acetylation.

The protein localises to the cytoplasm. Its subcellular location is the cytosol. It localises to the cell projection. It is found in the axon. The catalysed reaction is an aldehyde + NAD(+) + H2O = a carboxylate + NADH + 2 H(+). It carries out the reaction all-trans-retinal + NAD(+) + H2O = all-trans-retinoate + NADH + 2 H(+). It catalyses the reaction 9-cis-retinal + NAD(+) + H2O = 9-cis-retinoate + NADH + 2 H(+). The enzyme catalyses 11-cis-retinal + NAD(+) + H2O = 11-cis-retinoate + NADH + 2 H(+). The catalysed reaction is 13-cis-retinal + NAD(+) + H2O = 13-cis-retinoate + NADH + 2 H(+). It carries out the reaction 3-deoxyglucosone + NAD(+) + H2O = 2-dehydro-3-deoxy-D-gluconate + NADH + 2 H(+). It catalyses the reaction (E)-4-hydroxynon-2-enal + NAD(+) + H2O = (E)-4-hydroxynon-2-enoate + NADH + 2 H(+). The enzyme catalyses malonaldehyde + NAD(+) + H2O = 3-oxopropanoate + NADH + 2 H(+). The catalysed reaction is hexanal + NAD(+) + H2O = hexanoate + NADH + 2 H(+). It carries out the reaction propanal + NAD(+) + H2O = propanoate + NADH + 2 H(+). It catalyses the reaction acetaldehyde + NAD(+) + H2O = acetate + NADH + 2 H(+). The enzyme catalyses benzaldehyde + NAD(+) + H2O = benzoate + NADH + 2 H(+). The catalysed reaction is 4-aminobutanal + NAD(+) + H2O = 4-aminobutanoate + NADH + 2 H(+). Its pathway is cofactor metabolism; retinol metabolism. Inhibited by duocarmycin analogs. Its function is as follows. Cytosolic dehydrogenase that catalyzes the irreversible oxidation of a wide range of aldehydes to their corresponding carboxylic acid. Functions downstream of retinol dehydrogenases and catalyzes the oxidation of retinaldehyde into retinoic acid, the second step in the oxidation of retinol/vitamin A into retinoic acid. This pathway is crucial to control the levels of retinol and retinoic acid, two important molecules which excess can be teratogenic and cytotoxic. Also oxidizes aldehydes resulting from lipid peroxidation like (E)-4-hydroxynon-2-enal/HNE, malonaldehyde and hexanal that form protein adducts and are highly cytotoxic. By participating for instance to the clearance of (E)-4-hydroxynon-2-enal/HNE in the lens epithelium prevents the formation of HNE-protein adducts and lens opacification. Also functions downstream of fructosamine-3-kinase in the fructosamine degradation pathway by catalyzing the oxidation of 3-deoxyglucosone, the carbohydrate product of fructosamine 3-phosphate decomposition, which is itself a potent glycating agent that may react with lysine and arginine side-chains of proteins. Also has an aminobutyraldehyde dehydrogenase activity and is probably part of an alternative pathway for the biosynthesis of GABA/4-aminobutanoate in midbrain, thereby playing a role in GABAergic synaptic transmission. The polypeptide is Aldehyde dehydrogenase 1A1 (Ovis aries (Sheep)).